A 349-amino-acid polypeptide reads, in one-letter code: Glycerol-3-phosphate dehydrogenase [NAD(+)], cytoplasmic (349 aa).

NAD(+)-binding positions include 10 to 15, phenylalanine 41, and phenylalanine 97; that span reads GSGNWG. Position 120 (lysine 120) interacts with substrate. Alanine 153 is a binding site for NAD(+). Serine 154 carries the post-translational modification Phosphoserine. The Proton acceptor role is filled by lysine 204. Arginine 269 provides a ligand contact to NAD(+). 269–270 lines the substrate pocket; sequence RN. An N6-succinyllysine modification is found at lysine 289. Residues lysine 296 and glutamine 298 each coordinate NAD(+). Phosphotyrosine is present on tyrosine 326.

The protein belongs to the NAD-dependent glycerol-3-phosphate dehydrogenase family. In terms of assembly, homodimer. As to expression, expressed in liver (at protein level).

It is found in the cytoplasm. The enzyme catalyses sn-glycerol 3-phosphate + NAD(+) = dihydroxyacetone phosphate + NADH + H(+). Inhibited by zinc ions and sulfate. Its function is as follows. Has glycerol-3-phosphate dehydrogenase activity. In Homo sapiens (Human), this protein is Glycerol-3-phosphate dehydrogenase [NAD(+)], cytoplasmic.